The sequence spans 277 residues: Nudix hydrolase 10 (277 aa).

The Nudix hydrolase domain maps to 97–235; that stretch reads WIPEAESTIP…KNDLFKDIHH (139 aa). Residues 142–163 carry the Nudix box motif; the sequence is GVVDEGEEIFAAAIREVKEETG. The Mg(2+) site is built by glutamate 157 and glutamate 161.

This sequence belongs to the Nudix hydrolase family. The cofactor is Mg(2+). It depends on Mn(2+) as a cofactor. As to expression, expressed in roots, stems and, at lower level, leaves.

It catalyses the reaction ADP-D-ribose + H2O = D-ribose 5-phosphate + AMP + 2 H(+). It carries out the reaction NAD(+) + H2O = beta-nicotinamide D-ribonucleotide + AMP + 2 H(+). The catalysed reaction is NADH + H2O = reduced beta-nicotinamide D-ribonucleotide + AMP + 2 H(+). May mediate the hydrolysis of some nucleoside diphosphate derivatives. In vitro, uses both ADP-ribose and NADH as substrates; however the relevance of such substrates in vivo is unclear. This is Nudix hydrolase 10 (NUDT10) from Arabidopsis thaliana (Mouse-ear cress).